Reading from the N-terminus, the 425-residue chain is Serine--tRNA ligase (425 aa).

231 to 233 (TAE) lines the L-serine pocket. 262–264 (RSE) lines the ATP pocket. E285 contacts L-serine. 349-352 (EISS) provides a ligand contact to ATP. S385 contacts L-serine.

It belongs to the class-II aminoacyl-tRNA synthetase family. Type-1 seryl-tRNA synthetase subfamily. As to quaternary structure, homodimer. The tRNA molecule binds across the dimer.

It is found in the cytoplasm. It catalyses the reaction tRNA(Ser) + L-serine + ATP = L-seryl-tRNA(Ser) + AMP + diphosphate + H(+). The enzyme catalyses tRNA(Sec) + L-serine + ATP = L-seryl-tRNA(Sec) + AMP + diphosphate + H(+). It participates in aminoacyl-tRNA biosynthesis; selenocysteinyl-tRNA(Sec) biosynthesis; L-seryl-tRNA(Sec) from L-serine and tRNA(Sec): step 1/1. Functionally, catalyzes the attachment of serine to tRNA(Ser). Is also able to aminoacylate tRNA(Sec) with serine, to form the misacylated tRNA L-seryl-tRNA(Sec), which will be further converted into selenocysteinyl-tRNA(Sec). This is Serine--tRNA ligase from Bartonella quintana (strain Toulouse) (Rochalimaea quintana).